The following is a 132-amino-acid chain: Small ribosomal subunit protein uS8 (132 aa).

It belongs to the universal ribosomal protein uS8 family. Part of the 30S ribosomal subunit. Contacts proteins S5 and S12.

One of the primary rRNA binding proteins, it binds directly to 16S rRNA central domain where it helps coordinate assembly of the platform of the 30S subunit. The polypeptide is Small ribosomal subunit protein uS8 (Caldicellulosiruptor bescii (strain ATCC BAA-1888 / DSM 6725 / KCTC 15123 / Z-1320) (Anaerocellum thermophilum)).